Reading from the N-terminus, the 508-residue chain is UBX domain-containing protein 4 (508 aa).

Residues 1 to 200 (MLWFQGAIPA…PAEDLNIRVE (200 aa)) form an interaction with UBQLN1 region. The Cytoplasmic segment spans residues 1–413 (MLWFQGAIPA…VHSSSGDIWT (413 aa)). Polar residues-rich tracts occupy residues 117–151 (SETS…QSRN) and 160–187 (TSDT…SGCS). A disordered region spans residues 117–196 (SETSVANGSQ…SDQRPAEDLN (80 aa)). The region spanning 315-393 (ERSTVARIQF…ELAPSASVVV (79 aa)) is the UBX domain. The stretch at 414–434 (LLGTVLYPFLAIWRLISNFLF) is an intramembrane region. Residues 435 to 508 (SNPPPTQTSV…TWNGNSTQQM (74 aa)) lie on the Cytoplasmic side of the membrane. Positions 440-508 (TQTSVRVTSS…TWNGNSTQQM (69 aa)) are disordered. Polar residues predominate over residues 441-458 (QTSVRVTSSEPPNPASSS). Basic and acidic residues predominate over residues 459–491 (KSEKREPVRKRVLEKRGDDFKKEGKIYRLRTQD). T489 bears the Phosphothreonine mark. A compositionally biased stretch (polar residues) spans 498–508 (NTWNGNSTQQM).

Directly interacts with VCP. Interacts with UBQLN1. Forms a complex with VCP and UBQLN1.

Its subcellular location is the endoplasmic reticulum membrane. The protein resides in the nucleus envelope. Involved in endoplasmic reticulum-associated protein degradation (ERAD). Acts as a platform to recruit both UBQLN1 and VCP to the ER during ERAD. This is UBX domain-containing protein 4 (UBXN4) from Pongo abelii (Sumatran orangutan).